The sequence spans 702 residues: MKHSITGTIGDHPLLLESGYLARQANGSVYLQCEGTAILATVCSSAQRQEGLDYVPLTVDFNEKYYAVGKMPGGFIKREGRPKDREILISRLIDRPMRPLFEKEFGRDIHVVPTCISSDMVHPHDVLAIVASSAAVTLSDIPFHGPVAAVRVAYLNGSYVINPTFSQIDAASMEVVVAGTRQGITMVEGGAREVSEDLMLGALEQAQEHIKALCDMQERLRGLCGKEKQTVIPSSAQLVGRDRIYELAYPRLAQALYAQGKGERRSACDAVKRDVAQQYAAQLENDVQRRLFDALFHEMEYEILRLNILDRGLRIDGRAIDAIRPIACEVGVLPRPHGSAVFTRGETQSLAVVTLGAMSDGQVYDDIEGDRRENFILHYNFPPFSVGEIGRMGVGRREIGHGCLAHRSLSAVIPDPEQFPYTVRVVSEILESNGSSSMATVCSGTLSLLHAGVPIKKPVAGIAMGLITDGVRYAILSDILGEEDHLGDMDFKVAGTCDGITGFQMDVKVEAVSASLMKEALQQARVGRLHILSVMNQTISAPSVHISRYAPHIESFKIAVEKIGALIGPGGKTVKSLSDQYRVTINTDSDGTVTVSGRDAQSVFDAKVAVVGLTEDPRVGRVYQGVVKRIVEFGAFVEIFPGKEGLCHVSKLSRSRVSKVSDVLQEGQRICVKLIDIDRMGRLNLSYIDALEGKSGGLDTTK.

The Mg(2+) site is built by aspartate 484 and aspartate 490. The KH domain occupies 551 to 610 (PHIESFKIAVEKIGALIGPGGKTVKSLSDQYRVTINTDSDGTVTVSGRDAQSVFDAKVAV). Residues 620-688 (GRVYQGVVKR…RMGRLNLSYI (69 aa)) enclose the S1 motif domain.

Belongs to the polyribonucleotide nucleotidyltransferase family. The cofactor is Mg(2+).

It localises to the cytoplasm. It carries out the reaction RNA(n+1) + phosphate = RNA(n) + a ribonucleoside 5'-diphosphate. Functionally, involved in mRNA degradation. Catalyzes the phosphorolysis of single-stranded polyribonucleotides processively in the 3'- to 5'-direction. This chain is Polyribonucleotide nucleotidyltransferase, found in Treponema pallidum (strain Nichols).